The following is a 524-amino-acid chain: MDITNRQAVLKNFLGNSPDWYKLAIMGFLIINPLVFFFVSPFVAGWMLVIEFIFTLAMALKCYPLQPGGLLAIQAVAIGMTSPHQVAEEIANNLEVLLLLVFMVAGIYFMKQLLLFVFTKLLLNIRSKTILSLAFCLASAFLSAFLDALTVIAVVISVSVGFYTIYHNVTSNHSDKDITDDSGIDNQDSHETLEQFRAFLRSLMMHAGVGTALGGVMTMVGEPQNLIIAKSAGWNFADFFIRMLPVTLPVFICGLLVCLLVEKFKLFGYGAQLPERVRQVLTEYDQQASAKRTKQEKMKLIVQAIIGVWLVLALALHLAEVGLVGLSVIILATSFCGITNEHSLGKAFQEALPFTALLTVFFAVVAVIIEQSLFTPIIQFVLQASPSAQLSLFYLFNGLLSSVSDNVFVGTVYINEARSAFEHGIVSLQQFELLAVAINTGTNLPSVATPNGQAAFLFLLTSALAPLIRLSYGRMVYMALPYTLVMTIVGLLGVEFLLVPMTEWLTQAGWISLPHITNGVAIPH.

9 consecutive transmembrane segments (helical) span residues 13 to 33, 98 to 118, 140 to 160, 239 to 259, 304 to 324, 325 to 345, 358 to 378, 448 to 468, and 479 to 499; these read FLGNSPDWYKLAIMGFLIINP, LLLVFMVAGIYFMKQLLLFVF, AFLSAFLDALTVIAVVISVSV, FFIRMLPVTLPVFICGLLVCL, AIIGVWLVLALALHLAEVGLV, GLSVIILATSFCGITNEHSLG, LTVFFAVVAVIIEQSLFTPII, ATPNGQAAFLFLLTSALAPLI, and ALPYTLVMTIVGLLGVEFLLV.

It belongs to the NhaB Na(+)/H(+) (TC 2.A.34) antiporter family.

Its subcellular location is the cell inner membrane. It catalyses the reaction 2 Na(+)(in) + 3 H(+)(out) = 2 Na(+)(out) + 3 H(+)(in). Its function is as follows. Na(+)/H(+) antiporter that extrudes sodium in exchange for external protons. This Yersinia pseudotuberculosis serotype O:3 (strain YPIII) protein is Na(+)/H(+) antiporter NhaB.